A 492-amino-acid chain; its full sequence is Phytoene desaturase (lycopene-forming) (492 aa).

Residue 5–38 coordinates FAD; sequence VVIGAGFGGLALAIRLQAAGIPTVLLEQRDKPGG.

Belongs to the carotenoid/retinoid oxidoreductase family. It depends on FAD as a cofactor.

The enzyme catalyses 15-cis-phytoene + 4 A = all-trans-lycopene + 4 AH2. It participates in carotenoid biosynthesis; lycopene biosynthesis. In terms of biological role, this enzyme converts phytoene into lycopene via the intermediaries of phytofluene, zeta-carotene and neurosporene by the introduction of four double bonds. This is Phytoene desaturase (lycopene-forming) (crtI) from Pseudescherichia vulneris (Escherichia vulneris).